The primary structure comprises 309 residues: Mannitol-1-phosphatase (309 aa).

The active-site Tele-phosphohistidine intermediate is the H82. E166 acts as the Proton donor/acceptor in catalysis.

Belongs to the phosphoglycerate mutase family.

It catalyses the reaction D-mannitol 1-phosphate + H2O = D-mannitol + phosphate. Its activity is regulated as follows. By diethyl pyrocarbonate (DEPC). Key enzyme for mannitol biosynthesis. This Eimeria tenella (Coccidian parasite) protein is Mannitol-1-phosphatase.